Consider the following 327-residue polypeptide: Probable NAD(P)H-dependent D-xylose reductase xyl1 (327 aa).

Tyr57 functions as the Proton donor in the catalytic mechanism. Substrate is bound at residue His119. Residues 173 to 174 (SN), 222 to 231 (SSLGPQSFIE), and 278 to 288 (KSNNPDRLAQN) each bind NAD(+).

The protein belongs to the aldo/keto reductase family.

The enzyme catalyses xylitol + NAD(+) = D-xylose + NADH + H(+). The catalysed reaction is xylitol + NADP(+) = D-xylose + NADPH + H(+). Its pathway is carbohydrate metabolism; D-xylose degradation. Its function is as follows. Catalyzes the initial reaction in the xylose utilization pathway by reducing D-xylose into xylitol. Xylose is a major component of hemicelluloses such as xylan. Most fungi utilize D-xylose via three enzymatic reactions, xylose reductase (XR), xylitol dehydrogenase (XDH), and xylulokinase, to form xylulose 5-phosphate, which enters pentose phosphate pathway. This Arthroderma otae (strain ATCC MYA-4605 / CBS 113480) (Microsporum canis) protein is Probable NAD(P)H-dependent D-xylose reductase xyl1 (xyl1).